The chain runs to 252 residues: 1-(5-phosphoribosyl)-5-[(5-phosphoribosylamino)methylideneamino] imidazole-4-carboxamide isomerase (252 aa).

Residue Asp8 is the Proton acceptor of the active site. Asp129 serves as the catalytic Proton donor.

It belongs to the HisA/HisF family.

It is found in the cytoplasm. It carries out the reaction 1-(5-phospho-beta-D-ribosyl)-5-[(5-phospho-beta-D-ribosylamino)methylideneamino]imidazole-4-carboxamide = 5-[(5-phospho-1-deoxy-D-ribulos-1-ylimino)methylamino]-1-(5-phospho-beta-D-ribosyl)imidazole-4-carboxamide. It participates in amino-acid biosynthesis; L-histidine biosynthesis; L-histidine from 5-phospho-alpha-D-ribose 1-diphosphate: step 4/9. The chain is 1-(5-phosphoribosyl)-5-[(5-phosphoribosylamino)methylideneamino] imidazole-4-carboxamide isomerase from Synechococcus sp. (strain RCC307).